Here is a 178-residue protein sequence, read N- to C-terminus: Large ribosomal subunit protein uL6 (178 aa).

This sequence belongs to the universal ribosomal protein uL6 family. In terms of assembly, part of the 50S ribosomal subunit.

Its function is as follows. This protein binds to the 23S rRNA, and is important in its secondary structure. It is located near the subunit interface in the base of the L7/L12 stalk, and near the tRNA binding site of the peptidyltransferase center. This is Large ribosomal subunit protein uL6 from Sulfurovum sp. (strain NBC37-1).